The sequence spans 262 residues: Tryptophan synthase alpha chain (262 aa).

Catalysis depends on proton acceptor residues glutamate 48 and aspartate 59.

It belongs to the TrpA family. As to quaternary structure, tetramer of two alpha and two beta chains.

The catalysed reaction is (1S,2R)-1-C-(indol-3-yl)glycerol 3-phosphate + L-serine = D-glyceraldehyde 3-phosphate + L-tryptophan + H2O. It functions in the pathway amino-acid biosynthesis; L-tryptophan biosynthesis; L-tryptophan from chorismate: step 5/5. Functionally, the alpha subunit is responsible for the aldol cleavage of indoleglycerol phosphate to indole and glyceraldehyde 3-phosphate. This chain is Tryptophan synthase alpha chain, found in Helicobacter pylori (strain ATCC 700392 / 26695) (Campylobacter pylori).